A 189-amino-acid polypeptide reads, in one-letter code: MRKIGIIGGTFDPPHYGHLLIANEVYHALNLEEVWFLPNQIPPHKQGRNITSVESRLQMLELATEAEEHFSICLEELSRKGPSYTYDTMLQLTKKYPDVQFHFIIGGDMVEYLPKWYNIEALLDLVTFVGVARPGYKLRTPYPITTVEIPEFAVSSSLLRERYKEKKTCKYLLPEKVQVYIERNGLYES.

The protein belongs to the NadD family.

The catalysed reaction is nicotinate beta-D-ribonucleotide + ATP + H(+) = deamido-NAD(+) + diphosphate. It participates in cofactor biosynthesis; NAD(+) biosynthesis; deamido-NAD(+) from nicotinate D-ribonucleotide: step 1/1. Catalyzes the reversible adenylation of nicotinate mononucleotide (NaMN) to nicotinic acid adenine dinucleotide (NaAD). This is Probable nicotinate-nucleotide adenylyltransferase from Bacillus anthracis (strain CDC 684 / NRRL 3495).